The following is a 333-amino-acid chain: Holliday junction branch migration complex subunit RuvB (333 aa).

Positions 1–181 (MARILDNDLL…FGINGHMEYY (181 aa)) are large ATPase domain (RuvB-L). Residues leucine 20, arginine 21, glycine 62, lysine 65, threonine 66, threonine 67, 128-130 (EDY), arginine 171, tyrosine 181, and arginine 218 each bind ATP. Threonine 66 serves as a coordination point for Mg(2+). Residues 130 to 148 (YYIDIMIGAGETSRSVHLD) are presensor-1 beta-hairpin. A small ATPAse domain (RuvB-S) region spans residues 182–252 (ELPDLTEIVE…IADQALTMLD (71 aa)). The segment at 255-333 (HEGLDYVDQK…HMGYDYTRDN (79 aa)) is head domain (RuvB-H). The DNA site is built by arginine 291, arginine 310, arginine 312, and arginine 315.

The protein belongs to the RuvB family. As to quaternary structure, homohexamer. Forms an RuvA(8)-RuvB(12)-Holliday junction (HJ) complex. HJ DNA is sandwiched between 2 RuvA tetramers; dsDNA enters through RuvA and exits via RuvB. Only 4 subunits contact one DNA strand at any time. Two adjacent subunits are contacted by domain III of RuvA. An RuvB hexamer assembles on each DNA strand where it exits the tetramer. Each RuvB hexamer is contacted by two RuvA subunits (via domain III) on 2 adjacent RuvB subunits; this complex drives branch migration. In the full resolvosome a probable DNA-RuvA(4)-RuvB(12)-RuvC(2) complex forms which resolves the HJ.

The protein localises to the cytoplasm. The catalysed reaction is ATP + H2O = ADP + phosphate + H(+). With respect to regulation, binding of domain III of RuvA to a single subunit of the RuvB hexamer activates the ATPase 2 subunits away and nucleotide exchange in the adjacent subunit. The RuvA-RuvB-RuvC complex processes Holliday junction (HJ) DNA during genetic recombination and DNA repair, while the RuvA-RuvB complex plays an important role in the rescue of blocked DNA replication forks via replication fork reversal (RFR). Catalyzes branch migration on Holliday junction (HJ) DNA in complex with RuvA from S.typhimurim and ATP. RuvA specifically binds to HJ cruciform DNA, conferring on it an open structure. The RuvB hexamer acts as an ATP-dependent pump, pulling dsDNA into and through the RuvAB complex. Forms 2 homohexamers on either side of HJ DNA bound by 1 or 2 RuvA tetramers; 4 subunits per hexamer contact DNA at a time. Coordinated motions by a converter formed by DNA-disengaged RuvB subunits stimulates ATP hydrolysis and nucleotide exchange. Immobilization of the converter enables RuvB to convert the ATP-contained energy into a lever motion, pulling 2 nucleotides of DNA out of the RuvA tetramer per ATP hydrolyzed, thus driving DNA branch migration. The RuvB motors rotate together with the DNA substrate, which together with the progressing nucleotide cycle forms the mechanistic basis for DNA recombination by continuous branch migration. Branch migration allows RuvC to scan DNA until it finds its consensus sequence, where it cleaves and resolves cruciform DNA. The protein is Holliday junction branch migration complex subunit RuvB of Streptococcus thermophilus (strain ATCC BAA-250 / LMG 18311).